The sequence spans 452 residues: UDP-glycosyltransferase 79B11 (452 aa).

UDP-alpha-D-glucose contacts are provided by residues S260, 319-325, 340-348, and 362-365; these read VQQPSWQ, HCGFGSMWE, and LNDQ.

Belongs to the UDP-glycosyltransferase family.

This Arabidopsis thaliana (Mouse-ear cress) protein is UDP-glycosyltransferase 79B11 (UGT79B11).